We begin with the raw amino-acid sequence, 336 residues long: Probable carboxylesterase 6 (336 aa).

The disordered stretch occupies residues 1–20 (MGGTKLTHVTTTNPNNSNIH). A compositionally biased stretch (polar residues) spans 7 to 19 (THVTTTNPNNSNI). Positions 96–98 (HGG) match the Involved in the stabilization of the negatively charged intermediate by the formation of the oxyanion hole motif. Active-site residues include Ser176, Asp276, and His303.

It belongs to the 'GDXG' lipolytic enzyme family. Expressed in roots, leaves, flowers and siliques.

The catalysed reaction is a carboxylic ester + H2O = an alcohol + a carboxylate + H(+). Functionally, carboxylesterase acting on esters with varying acyl chain length. This chain is Probable carboxylesterase 6 (CXE6), found in Arabidopsis thaliana (Mouse-ear cress).